A 444-amino-acid polypeptide reads, in one-letter code: Xylose isomerase (444 aa).

Catalysis depends on residues H101 and D104. Positions 232, 268, 271, 296, 307, 309, and 339 each coordinate Mg(2+).

Belongs to the xylose isomerase family. In terms of assembly, homotetramer. Mg(2+) serves as cofactor.

The protein resides in the cytoplasm. It catalyses the reaction alpha-D-xylose = alpha-D-xylulofuranose. The chain is Xylose isomerase from Thermotoga sp. (strain RQ2).